The primary structure comprises 347 residues: Dual specificity mitogen-activated protein kinase kinase mek-1 (347 aa).

Residues 1–42 form a disordered region; the sequence is MERDFDLGMGRPGGLGGLGGEPIMQQMPQPAPHHPSRSSNDH. The span at 10–20 shows a compositional bias: gly residues; sequence GRPGGLGGLGG. The Protein kinase domain occupies 72–325; the sequence is LQFVEDIGHG…YDMLLQHPFV (254 aa). ATP contacts are provided by residues 78 to 86 and Lys99; that span reads IGHGSCGTV. Asp193 serves as the catalytic Proton acceptor. Ser221 and Ser225 each carry phosphoserine.

It belongs to the protein kinase superfamily. STE Ser/Thr protein kinase family. MAP kinase kinase subfamily. As to quaternary structure, interacts with shc-1; the interaction is independent of mek-1 catalytic activity, is constitutive and may facilitate mlk-1-mediated phosphorylation by bringing mlk-1 and mek-1 together. Requires Mg(2+) as cofactor. May be phosphorylated at Ser-221 and/or Ser-225 by mlk-1. In terms of tissue distribution, expressed in pharyngeal muscles, uterine endothelial cells, intestine and in neurons of ring ganglia, ventral ganglion and ganglia around anus. Expressed also in hypodermis and body muscles.

It carries out the reaction L-seryl-[protein] + ATP = O-phospho-L-seryl-[protein] + ADP + H(+). It catalyses the reaction L-threonyl-[protein] + ATP = O-phospho-L-threonyl-[protein] + ADP + H(+). The catalysed reaction is L-tyrosyl-[protein] + ATP = O-phospho-L-tyrosyl-[protein] + ADP + H(+). With respect to regulation, may be activated by phosphorylation at Ser-221 and Ser-225. Dual specificity protein kinase which may phosphorylate kgb-1 and thereby is an essential component of the JNK pathway composed of mlk-1, mek-1 and kgb-1. May also have a synergistic role with sek-1 in phosphorylating pmk-1. Involved in the response to environmental stress including heavy metal ions (Cu(2+) and Cd(2+)), oxidative stress and starvation. In association with sek-1, regulates germline cell apoptosis in response to oxidative, osmotic and heat shock stresses. Involved in resistance to pathogenic bacteria infection. Involved in axon regeneration after injury. This Caenorhabditis elegans protein is Dual specificity mitogen-activated protein kinase kinase mek-1.